A 110-amino-acid chain; its full sequence is MSEVKASLKGARLSAQKARLVVDQIRGKSVSEALNILTFSPKKAAVIVKKVLESAIANAEHNEGADVDDLRVSTAYVDEAMTLKRIMPRAKGRADRILKRGCHITVKVAD.

This sequence belongs to the universal ribosomal protein uL22 family. Part of the 50S ribosomal subunit.

In terms of biological role, this protein binds specifically to 23S rRNA; its binding is stimulated by other ribosomal proteins, e.g. L4, L17, and L20. It is important during the early stages of 50S assembly. It makes multiple contacts with different domains of the 23S rRNA in the assembled 50S subunit and ribosome. Functionally, the globular domain of the protein is located near the polypeptide exit tunnel on the outside of the subunit, while an extended beta-hairpin is found that lines the wall of the exit tunnel in the center of the 70S ribosome. The sequence is that of Large ribosomal subunit protein uL22 from Marinomonas sp. (strain MWYL1).